The primary structure comprises 357 residues: Holliday junction branch migration complex subunit RuvB (357 aa).

Over residues 1–15 (MAIQSDSLSSLPDSP) the composition is skewed to low complexity. Residues 1 to 30 (MAIQSDSLSSLPDSPRIVAPQPVSPNEESI) are disordered. The large ATPase domain (RuvB-L) stretch occupies residues 13–195 (DSPRIVAPQP…FGIVSRLEFY (183 aa)). ATP-binding positions include Leu-34, Arg-35, Gly-76, Lys-79, Thr-80, Thr-81, 142–144 (EDF), Arg-185, Tyr-195, and Arg-232. Thr-80 contributes to the Mg(2+) binding site. The small ATPAse domain (RuvB-S) stretch occupies residues 196 to 266 (NTDELARIVT…AAGRALAMLD (71 aa)). Residues 269–357 (PQGLDVMDRK…SGGTGELFSK (89 aa)) are head domain (RuvB-H). The DNA site is built by Arg-305, Arg-324, and Arg-329.

It belongs to the RuvB family. As to quaternary structure, homohexamer. Forms an RuvA(8)-RuvB(12)-Holliday junction (HJ) complex. HJ DNA is sandwiched between 2 RuvA tetramers; dsDNA enters through RuvA and exits via RuvB. An RuvB hexamer assembles on each DNA strand where it exits the tetramer. Each RuvB hexamer is contacted by two RuvA subunits (via domain III) on 2 adjacent RuvB subunits; this complex drives branch migration. In the full resolvosome a probable DNA-RuvA(4)-RuvB(12)-RuvC(2) complex forms which resolves the HJ.

It is found in the cytoplasm. The catalysed reaction is ATP + H2O = ADP + phosphate + H(+). Its function is as follows. The RuvA-RuvB-RuvC complex processes Holliday junction (HJ) DNA during genetic recombination and DNA repair, while the RuvA-RuvB complex plays an important role in the rescue of blocked DNA replication forks via replication fork reversal (RFR). RuvA specifically binds to HJ cruciform DNA, conferring on it an open structure. The RuvB hexamer acts as an ATP-dependent pump, pulling dsDNA into and through the RuvAB complex. RuvB forms 2 homohexamers on either side of HJ DNA bound by 1 or 2 RuvA tetramers; 4 subunits per hexamer contact DNA at a time. Coordinated motions by a converter formed by DNA-disengaged RuvB subunits stimulates ATP hydrolysis and nucleotide exchange. Immobilization of the converter enables RuvB to convert the ATP-contained energy into a lever motion, pulling 2 nucleotides of DNA out of the RuvA tetramer per ATP hydrolyzed, thus driving DNA branch migration. The RuvB motors rotate together with the DNA substrate, which together with the progressing nucleotide cycle form the mechanistic basis for DNA recombination by continuous HJ branch migration. Branch migration allows RuvC to scan DNA until it finds its consensus sequence, where it cleaves and resolves cruciform DNA. The chain is Holliday junction branch migration complex subunit RuvB from Bordetella bronchiseptica (strain ATCC BAA-588 / NCTC 13252 / RB50) (Alcaligenes bronchisepticus).